A 465-amino-acid polypeptide reads, in one-letter code: GTPase Der (465 aa).

EngA-type G domains lie at 3 to 167 (PLVA…PERS) and 179 to 352 (IHIA…VSAL). GTP contacts are provided by residues 9–16 (GRPNVGKS), 57–61 (DTGGM), 119–122 (NKID), 185–192 (GRPNVGKS), 232–236 (DTAGL), and 297–300 (NKWD). Residues 353–437 (RQFSTSEVNK…PVRFLFREGD (85 aa)) form the KH-like domain.

The protein belongs to the TRAFAC class TrmE-Era-EngA-EngB-Septin-like GTPase superfamily. EngA (Der) GTPase family. As to quaternary structure, associates with the 50S ribosomal subunit.

In terms of biological role, GTPase that plays an essential role in the late steps of ribosome biogenesis. This Xylella fastidiosa (strain M12) protein is GTPase Der.